Here is a 207-residue protein sequence, read N- to C-terminus: Ribonuclease HII (207 aa).

The RNase H type-2 domain occupies 20-207; that stretch reads QLFAGVDEVG…KPVKRVLGIE (188 aa). A divalent metal cation-binding residues include Asp26, Glu27, and Asp118.

Belongs to the RNase HII family. Requires Mn(2+) as cofactor. It depends on Mg(2+) as a cofactor.

The protein localises to the cytoplasm. The catalysed reaction is Endonucleolytic cleavage to 5'-phosphomonoester.. Its function is as follows. Endonuclease that specifically degrades the RNA of RNA-DNA hybrids. The protein is Ribonuclease HII of Aliivibrio fischeri (strain ATCC 700601 / ES114) (Vibrio fischeri).